The chain runs to 161 residues: Small ribosomal subunit protein uS9 (161 aa).

Positions 1–38 (MAQTITSLADLKQGPGAEPAGLSAEPQEPKLDKEGRAY) are disordered. Residues 27–38 (QEPKLDKEGRAY) are compositionally biased toward basic and acidic residues.

This sequence belongs to the universal ribosomal protein uS9 family.

The sequence is that of Small ribosomal subunit protein uS9 from Rhodospirillum centenum (strain ATCC 51521 / SW).